We begin with the raw amino-acid sequence, 1088 residues long: Probable cellulose synthase A catalytic subunit 9 [UDP-forming] (1088 aa).

M1 is subject to N-acetylmethionine. Residues 1–283 (MNTGGRLIAG…RSSRINPYRM (283 aa)) lie on the Cytoplasmic side of the membrane. Residues C39, C42, C58, C61, C66, C69, C81, and C84 each coordinate Zn(2+). The RING-type; degenerate zinc finger occupies 39–85 (CKICRDEIELTDNGEPFIACNECAFPTCRPCYEYERREGNQACPQCG). The helical transmembrane segment at 284 to 304 (LIFCRLAILGLFFHYRILHPV) threads the bilayer. The Extracellular portion of the chain corresponds to 305–306 (ND). A helical transmembrane segment spans residues 307–327 (AFGLWLTSVICEIWFAVSWIL). The Cytoplasmic segment spans residues 328–871 (DQFPKWYPIE…INSVVYPWTS (544 aa)). The UDP-alpha-D-glucose site is built by S366, K372, E373, D402, and K543. D402 is a catalytic residue. 2 residues coordinate Mn(2+): K544 and D568. Residue D788 is part of the active site. The chain crosses the membrane as a helical span at residues 872-892 (LPLLVYCSLPAICLLTGKFIV). Residues 893 to 897 (PEISN) lie on the Extracellular side of the membrane. Residues 898-918 (YAGILFLLMFMSIAVTGILEM) form a helical membrane-spanning segment. Residues 919-933 (QWGKIGIDDWWRNEQ) lie on the Cytoplasmic side of the membrane. A helical transmembrane segment spans residues 934-954 (FWVIGGVSSHLFALFQGLLKV). Residues 955–983 (LAGVSTNFTVTSKAADDGEFSELYIFKWT) lie on the Extracellular side of the membrane. The N-linked (GlcNAc...) asparagine glycan is linked to N961. Residues 984–1004 (SLLIPPTTLLIINIVGVIVGV) traverse the membrane as a helical segment. The Cytoplasmic segment spans residues 1005 to 1015 (SDAINNGYDSW). Residues 1016-1036 (GPLFGRLFFALWVIVHLYPFL) form a helical membrane-spanning segment. The Extracellular segment spans residues 1037-1045 (KGLLGKQDR). A helical membrane pass occupies residues 1046–1066 (VPTIILVWSILLASILTLLWV). At 1067–1088 (RVNPFVSKDGPVLEICGLDCLK) the chain is on the cytoplasmic side.

It belongs to the glycosyltransferase 2 family. Plant cellulose synthase subfamily. Mn(2+) serves as cofactor. The cofactor is Zn(2+). In terms of tissue distribution, expressed in young plants, stems and flowers.

The protein resides in the cell membrane. The catalysed reaction is [(1-&gt;4)-beta-D-glucosyl](n) + UDP-alpha-D-glucose = [(1-&gt;4)-beta-D-glucosyl](n+1) + UDP + H(+). Its pathway is glycan metabolism; plant cellulose biosynthesis. In terms of biological role, probable catalytic subunit of cellulose synthase terminal complexes ('rosettes'), required for beta-1,4-glucan microfibril crystallization, a major mechanism of the cell wall formation. This chain is Probable cellulose synthase A catalytic subunit 9 [UDP-forming], found in Arabidopsis thaliana (Mouse-ear cress).